The following is a 280-amino-acid chain: Hydroxyethylthiazole kinase (280 aa).

Met-58 contributes to the substrate binding site. Position 129 (Arg-129) interacts with ATP. Substrate is bound at residue Ala-206.

The protein belongs to the Thz kinase family. The cofactor is Mg(2+).

The enzyme catalyses 5-(2-hydroxyethyl)-4-methylthiazole + ATP = 4-methyl-5-(2-phosphooxyethyl)-thiazole + ADP + H(+). The protein operates within cofactor biosynthesis; thiamine diphosphate biosynthesis; 4-methyl-5-(2-phosphoethyl)-thiazole from 5-(2-hydroxyethyl)-4-methylthiazole: step 1/1. In terms of biological role, thiazole kinase involved in thiamine salvage pathway. This is Hydroxyethylthiazole kinase (THIM) from Zea mays (Maize).